The following is a 461-amino-acid chain: Threonine/serine transporter ThrP (461 aa).

12 helical membrane passes run Ile17 to Thr37, Trp40 to Met60, Trp97 to Phe117, Ala123 to Val143, Ile156 to Phe176, Gly201 to Ile221, Ile244 to Ile264, Ile278 to Gly298, Val333 to Ile353, Phe360 to Ile380, Ile401 to Met421, and Ser430 to Leu450.

It belongs to the amino acid-polyamine-organocation (APC) superfamily.

It is found in the cell inner membrane. The enzyme catalyses L-threonine(in) + H(+)(in) = L-threonine(out) + H(+)(out). The catalysed reaction is L-serine(in) + H(+)(in) = L-serine(out) + H(+)(out). In terms of biological role, permease that mediates the proton-dependent threonine and serine uptake. This Salmonella typhi protein is Threonine/serine transporter ThrP.